The sequence spans 577 residues: Arginine--tRNA ligase (577 aa).

A 'HIGH' region motif is present at residues 122–132; that stretch reads PNVAKEMHVGH.

The protein belongs to the class-I aminoacyl-tRNA synthetase family. Monomer.

It localises to the cytoplasm. It carries out the reaction tRNA(Arg) + L-arginine + ATP = L-arginyl-tRNA(Arg) + AMP + diphosphate. This chain is Arginine--tRNA ligase, found in Edwardsiella ictaluri (strain 93-146).